Here is a 137-residue protein sequence, read N- to C-terminus: uncharacterized protein (137 aa).

A signal peptide spans 1 to 21 (MFNRRVLFLSVFSCAVFMLSG). Residue Cys-22 is the site of N-palmitoyl cysteine attachment. Cys-22 is lipidated: S-diacylglycerol cysteine.

It is found in the membrane. This is an uncharacterized protein from Escherichia coli (strain K12).